The primary structure comprises 186 residues: Peptidyl-tRNA hydrolase (186 aa).

Tyr-14 provides a ligand contact to tRNA. His-19 functions as the Proton acceptor in the catalytic mechanism. Residues Phe-64, Asn-66, and Asn-112 each contribute to the tRNA site.

The protein belongs to the PTH family. In terms of assembly, monomer.

It is found in the cytoplasm. The enzyme catalyses an N-acyl-L-alpha-aminoacyl-tRNA + H2O = an N-acyl-L-amino acid + a tRNA + H(+). Hydrolyzes ribosome-free peptidyl-tRNAs (with 1 or more amino acids incorporated), which drop off the ribosome during protein synthesis, or as a result of ribosome stalling. Functionally, catalyzes the release of premature peptidyl moieties from peptidyl-tRNA molecules trapped in stalled 50S ribosomal subunits, and thus maintains levels of free tRNAs and 50S ribosomes. The polypeptide is Peptidyl-tRNA hydrolase (Listeria monocytogenes serotype 4a (strain HCC23)).